A 95-amino-acid polypeptide reads, in one-letter code: Co-chaperonin GroES (95 aa).

The protein belongs to the GroES chaperonin family. As to quaternary structure, heptamer of 7 subunits arranged in a ring. Interacts with the chaperonin GroEL.

Its subcellular location is the cytoplasm. Functionally, together with the chaperonin GroEL, plays an essential role in assisting protein folding. The GroEL-GroES system forms a nano-cage that allows encapsulation of the non-native substrate proteins and provides a physical environment optimized to promote and accelerate protein folding. GroES binds to the apical surface of the GroEL ring, thereby capping the opening of the GroEL channel. The sequence is that of Co-chaperonin GroES from Rickettsia rickettsii (strain Sheila Smith).